We begin with the raw amino-acid sequence, 419 residues long: Acetyl transferase GW6a (419 aa).

The region spanning 12-210 is the N-acetyltransferase domain; it reads VRVREFDVEK…GHPVHAHRLP (199 aa). Residues 44–68 are disordered; that stretch reads VHDHADDGDGAAAKEKKKTKTKTKK. A compositionally biased stretch (basic residues) spans 58–68; sequence EKKKTKTKTKK.

The protein belongs to the acetyltransferase family. In terms of assembly, interacts (via C-terminus) with HDR3 (via N-terminus). Post-translationally, ubiquitinated at Lys-63 by HDR3. Polyubiquitination of GW6A delays its degradation by the 26S proteasome and enhances GW6A histone acetyltransferase activity. Expressed in roots, leaf blades, leaf sheaths, shoot apical meristem and young panicles.

Its subcellular location is the nucleus. Functionally, possesses intrinsic histone acetyltransferase activity and acts as a positive regulator of grain weight, hull size, yield, and plant biomass. Regulates postitively grain weight and yield by enlarging spikelet hulls via increasing cell number and accelerating grain filling. In vitro, catalyzes the acetylation of histone H4 at Lys-6 (H4K5ac), Lys-13 (H4K12ac) and Lys-17 (H4K16ac). Involved in the regulation of plastochron (the time interval between leaf initiation event). This chain is Acetyl transferase GW6a, found in Oryza sativa subsp. japonica (Rice).